Here is a 117-residue protein sequence, read N- to C-terminus: Large ribosomal subunit protein bL19 (117 aa).

This sequence belongs to the bacterial ribosomal protein bL19 family.

Its function is as follows. This protein is located at the 30S-50S ribosomal subunit interface and may play a role in the structure and function of the aminoacyl-tRNA binding site. The polypeptide is Large ribosomal subunit protein bL19 (Vibrio vulnificus (strain CMCP6)).